The primary structure comprises 71 residues: UPF0435 protein BPUM_0734 (71 aa).

Belongs to the UPF0435 family.

This Bacillus pumilus (strain SAFR-032) protein is UPF0435 protein BPUM_0734.